The sequence spans 864 residues: Xylosyltransferase 2 (864 aa).

Topologically, residues 1 to 15 (MVASARVQKLVRRYK) are cytoplasmic. Residues 16–36 (LAIATALAILLLQGLVVWSFS) traverse the membrane as a helical; Signal-anchor for type II membrane protein segment. Over 37–864 (GLEEDEPGEK…GPVKADGRLR (828 aa)) the chain is Lumenal. Disordered stretches follow at residues 39-123 (EEDE…RQNL) and 136-158 (AGFP…DNSF). Residues 53-65 (RPLDPGEGSKDTD) are compositionally biased toward basic and acidic residues. Positions 73–82 (SAGRRHGRWR) are enriched in basic residues. N-linked (GlcNAc...) asparagine glycosylation occurs at N122. Intrachain disulfides connect C162/C190, C206/C448, C467/C480, and C469/C478. UDP-alpha-D-xylose is bound by residues V239, D267, and 296-298 (TIW). The N-linked (GlcNAc...) asparagine glycan is linked to N327. 400–401 (DW) is a UDP-alpha-D-xylose binding site. UDP-alpha-D-xylose-binding positions include S481 and 504–505 (RK). 2 disulfides stabilise this stretch: C580/C832 and C825/C838. The N-linked (GlcNAc...) asparagine glycan is linked to N682.

The protein belongs to the glycosyltransferase 14 family. XylT subfamily. As to quaternary structure, monomer. It depends on Mg(2+) as a cofactor. Mn(2+) is required as a cofactor. In terms of processing, contains disulfide bonds.

The protein resides in the golgi apparatus membrane. It is found in the secreted. The enzyme catalyses UDP-alpha-D-xylose + L-seryl-[protein] = 3-O-(beta-D-xylosyl)-L-seryl-[protein] + UDP + H(+). It participates in glycan metabolism; chondroitin sulfate biosynthesis. Its pathway is glycan metabolism; heparan sulfate biosynthesis. Catalyzes the first step in the biosynthesis of chondroitin sulfate, heparan sulfate and dermatan sulfate proteoglycans, such as DCN. Transfers D-xylose from UDP-D-xylose to specific serine residues of the core protein. This is Xylosyltransferase 2 (Xylt2) from Rattus norvegicus (Rat).